The primary structure comprises 87 residues: Large ribosomal subunit protein bL27 (87 aa).

It belongs to the bacterial ribosomal protein bL27 family.

The sequence is that of Large ribosomal subunit protein bL27 from Stenotrophomonas maltophilia (strain K279a).